The sequence spans 80 residues: RNA-binding protein Hfq (80 aa).

The 61-residue stretch at 10–70 (DLFLNTVRKQ…ISTIMPGQPL (61 aa)) folds into the Sm domain.

The protein belongs to the Hfq family. Homohexamer.

Its function is as follows. RNA chaperone that binds small regulatory RNA (sRNAs) and mRNAs to facilitate mRNA translational regulation in response to envelope stress, environmental stress and changes in metabolite concentrations. Also binds with high specificity to tRNAs. The polypeptide is RNA-binding protein Hfq (Rhizobium meliloti (strain 1021) (Ensifer meliloti)).